A 161-amino-acid chain; its full sequence is Putative 4-hydroxy-4-methyl-2-oxoglutarate aldolase (161 aa).

Substrate is bound by residues 77–80 (GGNL) and Arg-99. Asp-100 contacts a divalent metal cation.

The protein belongs to the class II aldolase/RraA-like family. As to quaternary structure, homotrimer. A divalent metal cation serves as cofactor.

It catalyses the reaction 4-hydroxy-4-methyl-2-oxoglutarate = 2 pyruvate. It carries out the reaction oxaloacetate + H(+) = pyruvate + CO2. Catalyzes the aldol cleavage of 4-hydroxy-4-methyl-2-oxoglutarate (HMG) into 2 molecules of pyruvate. Also contains a secondary oxaloacetate (OAA) decarboxylase activity due to the common pyruvate enolate transition state formed following C-C bond cleavage in the retro-aldol and decarboxylation reactions. The chain is Putative 4-hydroxy-4-methyl-2-oxoglutarate aldolase from Methylococcus capsulatus (strain ATCC 33009 / NCIMB 11132 / Bath).